Consider the following 446-residue polypeptide: MILGQPLAQWRAQYPLLDELIALRETSWFNPAVAPAAEALGDVGLSAADVADARARLERFAPYLARAFPQTAASGGIIESDILPLPQMQALLREEAEGEIGALWLKRDSHLPISGSIKARGGIYEVLKHAEDLALAAGLLGLDDDYACLDSDAMRAFFGGYQVAVGSTGNLGLSIGIISARLGFQATVHMSADARQWKKDKLRAHGVTVVEYASDYSVAVEQGRRQAEADPRCHFVDDENSRHLFLGYAVAGERLRQQLAAANVVVDAEHPLFVYLPCGVGGGPGGVAFGLKLAFGDAVHCLFAEPTHSPCMLLGVHTGRHEELAVQDFGIDNRTAADGLAVGRPSGFVGRAMQRLIDGYYTVSDEQLFRYLALVEQTEGQRLEPSALAGMPGVLRVLGERQGYRQRMGLTPQRMARATHLVWATGGSMVPEAEMDSYLARGRQLL.

Position 118 is an N6-(pyridoxal phosphate)lysine (lysine 118).

Belongs to the serine/threonine dehydratase family. DsdA subfamily. Pyridoxal 5'-phosphate serves as cofactor.

The catalysed reaction is D-serine = pyruvate + NH4(+). In Ectopseudomonas mendocina (strain ymp) (Pseudomonas mendocina), this protein is Probable D-serine dehydratase.